The sequence spans 158 residues: MGIEGLLEKGFVTTTIDTVVNWGRTGSLWPMTFGLACCAVEMMHAGAARYDLDRFGIVFRPSPRQSDVMIVAGTLVNKMAPALRKVYDQMPEPRWVVSMGSCANGGGYYHYSYSIVRGCDRIVPVDIYVPGCPPTAEALLFGLVQLQKKIRRTNTIAR.

Residues Cys-37, Cys-38, Cys-102, and Cys-132 each coordinate [4Fe-4S] cluster.

This sequence belongs to the complex I 20 kDa subunit family. NDH-1 is composed of 14 different subunits. Subunits NuoB, C, D, E, F, and G constitute the peripheral sector of the complex. The cofactor is [4Fe-4S] cluster.

It is found in the cell inner membrane. It carries out the reaction a quinone + NADH + 5 H(+)(in) = a quinol + NAD(+) + 4 H(+)(out). Functionally, NDH-1 shuttles electrons from NADH, via FMN and iron-sulfur (Fe-S) centers, to quinones in the respiratory chain. Couples the redox reaction to proton translocation (for every two electrons transferred, four hydrogen ions are translocated across the cytoplasmic membrane), and thus conserves the redox energy in a proton gradient. The chain is NADH-quinone oxidoreductase subunit B 2 from Acidithiobacillus ferrooxidans (strain ATCC 53993 / BNL-5-31) (Leptospirillum ferrooxidans (ATCC 53993)).